Reading from the N-terminus, the 1496-residue chain is Chromosome partition protein MukB (1496 aa).

Residue 63-70 participates in ATP binding; sequence GGNGAGKS. Coiled-coil stretches lie at residues 328-493 and 536-632; these read KLEL…QRLS and KMQA…APAW. The segment at 694–811 is flexible hinge; sequence PDGSDDVRLN…EVPLFGRAAR (118 aa). Coiled-coil stretches lie at residues 861–1171 and 1235–1291; these read NPEE…SAEE and IDAI…LQNI. Residues 1082 to 1091 show a composition bias toward basic and acidic residues; that stretch reads RARSRRDELQ. The segment at 1082–1101 is disordered; sequence RARSRRDELQQRLSQQRSRK.

This sequence belongs to the SMC family. MukB subfamily. Homodimerization via its hinge domain. Binds to DNA via its C-terminal region. Interacts, and probably forms a ternary complex, with MukE and MukF via its C-terminal region. The complex formation is stimulated by calcium or magnesium. Interacts with tubulin-related protein FtsZ.

It is found in the cytoplasm. It localises to the nucleoid. Its function is as follows. Plays a central role in chromosome condensation, segregation and cell cycle progression. Functions as a homodimer, which is essential for chromosome partition. Involved in negative DNA supercoiling in vivo, and by this means organize and compact chromosomes. May achieve or facilitate chromosome segregation by condensation DNA from both sides of a centrally located replisome during cell division. The polypeptide is Chromosome partition protein MukB (Actinobacillus pleuropneumoniae serotype 7 (strain AP76)).